The chain runs to 588 residues: Adenine deaminase (588 aa).

This sequence belongs to the metallo-dependent hydrolases superfamily. Adenine deaminase family. In terms of assembly, homodimer. Requires Mn(2+) as cofactor.

The catalysed reaction is adenine + H2O + H(+) = hypoxanthine + NH4(+). This chain is Adenine deaminase, found in Escherichia coli O7:K1 (strain IAI39 / ExPEC).